Here is a 270-residue protein sequence, read N- to C-terminus: Proteasome subunit alpha type-1 (270 aa).

Residues 239-270 (SMEAAEEAPAAEAESSSMQEEDKGTDAAPMDI) are disordered. The span at 245-256 (EAPAAEAESSSM) shows a compositional bias: low complexity.

The protein belongs to the peptidase T1A family. In terms of assembly, the 26S proteasome consists of a 20S proteasome core and two 19S regulatory subunits. The 20S proteasome core is composed of 28 subunits that are arranged in four stacked rings, resulting in a barrel-shaped structure. The two end rings are each formed by seven alpha subunits, and the two central rings are each formed by seven beta subunits. The catalytic chamber with the active sites is on the inside of the barrel.

The protein localises to the cytoplasm. Its subcellular location is the nucleus. In terms of biological role, the proteasome is a multicatalytic proteinase complex which is characterized by its ability to cleave peptides with Arg, Phe, Tyr, Leu, and Glu adjacent to the leaving group at neutral or slightly basic pH. The proteasome has an ATP-dependent proteolytic activity. This chain is Proteasome subunit alpha type-1 (PAF1), found in Oryza sativa subsp. japonica (Rice).